Consider the following 336-residue polypeptide: Adenosine deaminase (336 aa).

Zn(2+) contacts are provided by H15 and H17. Substrate-binding residues include H17, D19, and G172. Residue H199 participates in Zn(2+) binding. E202 serves as the catalytic Proton donor. Zn(2+) is bound at residue D279.

The protein belongs to the metallo-dependent hydrolases superfamily. Adenosine and AMP deaminases family. Adenosine deaminase subfamily. Zn(2+) serves as cofactor.

The enzyme catalyses adenosine + H2O + H(+) = inosine + NH4(+). The catalysed reaction is 2'-deoxyadenosine + H2O + H(+) = 2'-deoxyinosine + NH4(+). Its function is as follows. Catalyzes the hydrolytic deamination of adenosine and 2-deoxyadenosine. This chain is Adenosine deaminase, found in Streptococcus thermophilus (strain ATCC BAA-250 / LMG 18311).